Reading from the N-terminus, the 229-residue chain is Cytidylate kinase (229 aa).

10-18 (GFSSCGKST) is an ATP binding site.

It belongs to the cytidylate kinase family. Type 1 subfamily.

The protein resides in the cytoplasm. The catalysed reaction is CMP + ATP = CDP + ADP. It catalyses the reaction dCMP + ATP = dCDP + ADP. This chain is Cytidylate kinase, found in Bacteroides thetaiotaomicron (strain ATCC 29148 / DSM 2079 / JCM 5827 / CCUG 10774 / NCTC 10582 / VPI-5482 / E50).